A 428-amino-acid chain; its full sequence is Hercynine oxygenase (428 aa).

Histidine 46 provides a ligand contact to Fe cation. 82–85 (RASR) contributes to the gamma-L-glutamyl-L-cysteine binding site. Residues histidine 129 and histidine 133 each coordinate Fe cation. 2 residues coordinate gamma-L-glutamyl-L-cysteine: aspartate 411 and arginine 415.

This sequence belongs to the EgtB family. Monomer. Requires Fe(2+) as cofactor.

The enzyme catalyses gamma-L-glutamyl-L-cysteine + hercynine + O2 = gamma-L-glutamyl-hercynylcysteine S-oxide + H2O. It participates in amino-acid biosynthesis; ergothioneine biosynthesis. Catalyzes the oxidative sulfurization of hercynine (N-alpha,N-alpha,N-alpha-trimethyl-L-histidine) into hercynyl-gamma-L-glutamyl-L-cysteine sulfoxide, a step in the biosynthesis pathway of ergothioneine. Cannot use the alternative thiols cysteine, N-acetylcysteine, or glutathione instead of gamma-glutamylcysteine as substrates, and histidine is a poor sulfur acceptor substrate compared to hercynine. The chain is Hercynine oxygenase from Mycolicibacterium smegmatis (strain ATCC 700084 / mc(2)155) (Mycobacterium smegmatis).